Consider the following 334-residue polypeptide: Glycerol-3-phosphate dehydrogenase [NAD(P)+] (334 aa).

Residues W13, R33, and K106 each contribute to the NADPH site. K106, G137, and S139 together coordinate sn-glycerol 3-phosphate. Residue A141 coordinates NADPH. K192, D245, S255, R256, and N257 together coordinate sn-glycerol 3-phosphate. The Proton acceptor role is filled by K192. R256 contributes to the NADPH binding site. NADPH-binding residues include V280 and E282.

This sequence belongs to the NAD-dependent glycerol-3-phosphate dehydrogenase family.

The protein resides in the cytoplasm. It catalyses the reaction sn-glycerol 3-phosphate + NAD(+) = dihydroxyacetone phosphate + NADH + H(+). It carries out the reaction sn-glycerol 3-phosphate + NADP(+) = dihydroxyacetone phosphate + NADPH + H(+). Its pathway is membrane lipid metabolism; glycerophospholipid metabolism. In terms of biological role, catalyzes the reduction of the glycolytic intermediate dihydroxyacetone phosphate (DHAP) to sn-glycerol 3-phosphate (G3P), the key precursor for phospholipid synthesis. This chain is Glycerol-3-phosphate dehydrogenase [NAD(P)+], found in Chlamydia felis (strain Fe/C-56) (Chlamydophila felis).